The following is a 244-amino-acid chain: Sperm-egg fusion protein Juno (244 aa).

The signal sequence occupies residues 1-19 (MAQWWLILLGLWTVLPSLA). 8 disulfide bridges follow: Cys-27–Cys-55, Cys-47–Cys-95, Cys-56–Cys-99, Cys-79–Cys-166, Cys-86–Cys-137, Cys-126–Cys-200, Cys-130–Cys-180, and Cys-143–Cys-160. The tract at residues 62 to 81 (WEAHLDEPLLFNFSMTHCGL) is important for interaction with IZUMO1. Asn-73 carries an N-linked (GlcNAc...) asparagine glycan. Residues 223-244 (SASAPQLSYSITAFSLCLLLHA) constitute a propeptide that is removed on maturation.

This sequence belongs to the folate receptor family. As to quaternary structure, monomer. Interacts with IZUMO1; the interaction is direct. IZUMO1 and IZUMO1R/JUNO form a complex with 1:1 stoichiometry. Interacts with FCRL3/MAIA; FCRL3/MAIA replaces IZUMO1R/JUNO as IZUMO1 receptor after sperm-egg adhesion, thereby permitting species-specific gamete fusion. Interacts with WDR54. In terms of processing, the protein is rapidly cleaved following fertilization, being only weakly detectable in zona-intact fertilized eggs at telophase II and undetectable at the pronuclear stage. Sheding is probably required to block to polyspermy and ensuring egg fusion with a single sperm. As to expression, expressed in the oocyte (at protein level).

It localises to the cell membrane. It is found in the cell projection. The protein resides in the microvillus membrane. Receptor for IZUMO1 present at the cell surface of oocytes (oolemma), which is essential for species-specific gamete recognition and fertilization. The IZUMO1:IZUMO1R/JUNO interaction is a necessary adhesion event between sperm and egg that is required for fertilization but is not sufficient for cell fusion. The ligand-receptor interaction probably does not act as a membrane 'fusogen'. Does not bind folate. The sequence is that of Sperm-egg fusion protein Juno (Izumo1r) from Rattus norvegicus (Rat).